The following is a 357-amino-acid chain: Serpentine receptor class epsilon-30 (357 aa).

7 helical membrane passes run 31–51, 61–81, 121–141, 165–185, 192–212, 253–273, and 283–303; these read IFEL…IFVM, LMFL…GKFI, LLIF…FGIL, IPII…LAII, FLAR…FLFI, LVVV…ALTF, and LIEN…MFSI.

The protein belongs to the nematode receptor-like protein sre family.

The protein resides in the membrane. This chain is Serpentine receptor class epsilon-30 (sre-30), found in Caenorhabditis elegans.